A 500-amino-acid chain; its full sequence is 4-aminobutyrate aminotransferase, mitochondrial (500 aa).

The N-terminal 28 residues, 1–28 (MASVLLTRRLACSFRHNHRLLVPGWRHI), are a transit peptide targeting the mitochondrion. C163 contacts [2Fe-2S] cluster. 164-165 (GS) serves as a coordination point for pyridoxal 5'-phosphate. A [2Fe-2S] cluster-binding site is contributed by C166. R220 is a substrate binding site. K231 is subject to N6-succinyllysine. The residue at position 252 (K252) is an N6-acetyllysine; alternate. An N6-succinyllysine; alternate modification is found at K252. 2 positions are modified to N6-acetyllysine: K279 and K318. N6-(pyridoxal phosphate)lysine is present on K357. T381 is a pyridoxal 5'-phosphate binding site. An N6-acetyllysine; alternate modification is found at K413. At K413 the chain carries N6-succinyllysine; alternate. Residues K452 and K470 each carry the N6-acetyllysine modification.

Belongs to the class-III pyridoxal-phosphate-dependent aminotransferase family. As to quaternary structure, homodimer; disulfide-linked. The cofactor is pyridoxal 5'-phosphate. Requires [2Fe-2S] cluster as cofactor.

The protein resides in the mitochondrion matrix. It carries out the reaction 4-aminobutanoate + 2-oxoglutarate = succinate semialdehyde + L-glutamate. It catalyses the reaction (S)-3-amino-2-methylpropanoate + 2-oxoglutarate = 2-methyl-3-oxopropanoate + L-glutamate. Its function is as follows. Catalyzes the conversion of gamma-aminobutyrate and L-beta-aminoisobutyrate to succinate semialdehyde and methylmalonate semialdehyde, respectively. Can also convert delta-aminovalerate and beta-alanine. The protein is 4-aminobutyrate aminotransferase, mitochondrial (ABAT) of Sus scrofa (Pig).